We begin with the raw amino-acid sequence, 78 residues long: Large ribosomal subunit protein bL28 (78 aa).

The interval 1–26 (MARVCQVTGKRPMSGHNVSHANNKTK) is disordered.

This sequence belongs to the bacterial ribosomal protein bL28 family.

The polypeptide is Large ribosomal subunit protein bL28 (Nitrosomonas europaea (strain ATCC 19718 / CIP 103999 / KCTC 2705 / NBRC 14298)).